Here is a 319-residue protein sequence, read N- to C-terminus: 2,3,4,5-tetrahydropyridine-2,6-dicarboxylate N-succinyltransferase (319 aa).

Mg(2+) is bound by residues D167 and E184. E200 functions as the Acyl-anhydride intermediate in the catalytic mechanism. Succinyl-CoA contacts are provided by residues R202, G217, S220, A243, 258–259 (EA), and K278.

The protein belongs to the type 2 tetrahydrodipicolinate N-succinyltransferase family. In terms of assembly, homotrimer.

The protein localises to the cytoplasm. It catalyses the reaction (S)-2,3,4,5-tetrahydrodipicolinate + succinyl-CoA + H2O = (S)-2-succinylamino-6-oxoheptanedioate + CoA. It functions in the pathway amino-acid biosynthesis; L-lysine biosynthesis via DAP pathway; LL-2,6-diaminopimelate from (S)-tetrahydrodipicolinate (succinylase route): step 1/3. Catalyzes the conversion of the cyclic tetrahydrodipicolinate (THDP) into the acyclic N-succinyl-L-2-amino-6-oxopimelate using succinyl-CoA. This is 2,3,4,5-tetrahydropyridine-2,6-dicarboxylate N-succinyltransferase from Salinispora tropica (strain ATCC BAA-916 / DSM 44818 / JCM 13857 / NBRC 105044 / CNB-440).